A 146-amino-acid chain; its full sequence is Angiogenin (146 aa).

The first 24 residues, Met-1 to Ala-24, serve as a signal peptide directing secretion. Gln-25 is subject to Pyrrolidone carboxylic acid. Catalysis depends on His-37, which acts as the Proton acceptor. TRNA is bound at residue Arg-45. 3 cysteine pairs are disulfide-bonded: Cys-50–Cys-105, Cys-63–Cys-116, and Cys-81–Cys-131. The short motif at Arg-55–Leu-59 is the Nucleolar localization signal element. Positions 105 and 127 each coordinate tRNA. His-138 serves as the catalytic Proton donor.

Belongs to the pancreatic ribonuclease family. In terms of assembly, homodimer. Interacts with RNH1; inhibiting ANG ribonuclease activity. Interacts with PCNA.

Its subcellular location is the secreted. It is found in the nucleus. It localises to the nucleolus. The protein localises to the cytoplasm. The protein resides in the stress granule. Its activity is regulated as follows. Has weak tRNA ribonuclease activity by itself due to partial autoinhibition by its C-terminus, which folds into a short alpha-helix that partially occludes the substrate-binding site. In absence of stress, the ribonuclease activity is inhibited by RNH1 in the cytoplasm. In response to stress, dissociates from RNH1 in the cytoplasm and associates with cytoplasmic ribosomes with vacant A-sites: ribosomes directly activate the tRNA ribonuclease activity of ANG by refolding the C-terminal alpha-helix. In response to stress, the angiogenic activity of ANG is inhibited by RNH1 in the nucleus. Its function is as follows. Secreted ribonuclease that can either promote or restrict cell proliferation of target cells, depending on the context. Endocytosed in target cells via its receptor PLXNB2 and translocates to the cytoplasm or nucleus. Under stress conditions, localizes to the cytoplasm and promotes the assembly of stress granules (SGs): specifically cleaves a subset of tRNAs within anticodon loops to produce tRNA-derived stress-induced fragments (tiRNAs), resulting in translation repression and inhibition of cell proliferation. tiRNas also prevent formation of apoptosome, thereby promoting cell survival. Preferentially cleaves RNAs between a pyrimidine and an adenosine residue, suggesting that it cleaves the anticodon loop of tRNA(Ala) (32-UUAGCAU-38) after positions 33 and 36. Cleaves a subset of tRNAs, including tRNA(Ala), tRNA(Glu), tRNA(Gly), tRNA(Lys), tRNA(Val), tRNA(His), tRNA(Asp) and tRNA(Sec). Under growth conditions and in differentiated cells, translocates to the nucleus and stimulates ribosomal RNA (rRNA) transcription, including that containing the initiation site sequences of 45S rRNA, thereby promoting cell growth and proliferation. Angiogenin induces vascularization of normal and malignant tissues via its ability to promote rRNA transcription. Involved in hematopoietic stem and progenitor cell (HSPC) growth and survival by promoting rRNA transcription in growth conditions and inhibiting translation in response to stress, respectively. Mediates the crosstalk between myeloid and intestinal epithelial cells to protect the intestinal epithelial barrier integrity: secreted by myeloid cells and promotes intestinal epithelial cells proliferation and survival. Also mediates osteoclast-endothelial cell crosstalk in growing bone: produced by osteoclasts and protects the neighboring vascular cells against senescence by promoting rRNA transcription. In Papio hamadryas (Hamadryas baboon), this protein is Angiogenin (ANG).